Consider the following 150-residue polypeptide: Arginine repressor (150 aa).

The protein belongs to the ArgR family.

It is found in the cytoplasm. It functions in the pathway amino-acid biosynthesis; L-arginine biosynthesis [regulation]. Regulates arginine biosynthesis genes. The protein is Arginine repressor of Staphylococcus epidermidis (strain ATCC 35984 / DSM 28319 / BCRC 17069 / CCUG 31568 / BM 3577 / RP62A).